The chain runs to 389 residues: 23S rRNA (uracil(747)-C(5))-methyltransferase RlmC (389 aa).

[4Fe-4S] cluster-binding residues include cysteine 6, cysteine 14, cysteine 17, and cysteine 92. Positions 217, 246, 273, and 319 each coordinate S-adenosyl-L-methionine. Catalysis depends on cysteine 346, which acts as the Nucleophile.

It belongs to the class I-like SAM-binding methyltransferase superfamily. RNA M5U methyltransferase family. RlmC subfamily.

It catalyses the reaction uridine(747) in 23S rRNA + S-adenosyl-L-methionine = 5-methyluridine(747) in 23S rRNA + S-adenosyl-L-homocysteine + H(+). Catalyzes the formation of 5-methyl-uridine at position 747 (m5U747) in 23S rRNA. In Glaesserella parasuis serovar 5 (strain SH0165) (Haemophilus parasuis), this protein is 23S rRNA (uracil(747)-C(5))-methyltransferase RlmC.